A 277-amino-acid polypeptide reads, in one-letter code: Large ribosomal subunit protein uL2 (277 aa).

A disordered region spans residues 223–277; the sequence is VAMNPVDHPHGGGEGRTSTGRHPVTPWGKRTLGKKTRKRKASDKYIIRSRRARKR. Basic residues predominate over residues 253 to 277; it reads TLGKKTRKRKASDKYIIRSRRARKR.

This sequence belongs to the universal ribosomal protein uL2 family. In terms of assembly, part of the 50S ribosomal subunit. Forms a bridge to the 30S subunit in the 70S ribosome.

In terms of biological role, one of the primary rRNA binding proteins. Required for association of the 30S and 50S subunits to form the 70S ribosome, for tRNA binding and peptide bond formation. It has been suggested to have peptidyltransferase activity; this is somewhat controversial. Makes several contacts with the 16S rRNA in the 70S ribosome. This chain is Large ribosomal subunit protein uL2, found in Halothermothrix orenii (strain H 168 / OCM 544 / DSM 9562).